The chain runs to 813 residues: Leucine--tRNA ligase (813 aa).

A 'HIGH' region motif is present at residues 41–51 (PYPSGTLHMGH). The 'KMSKS' region motif lies at 575 to 579 (KMSKS). Residue K578 coordinates ATP.

This sequence belongs to the class-I aminoacyl-tRNA synthetase family.

The protein localises to the cytoplasm. It catalyses the reaction tRNA(Leu) + L-leucine + ATP = L-leucyl-tRNA(Leu) + AMP + diphosphate. This Francisella tularensis subsp. holarctica (strain FTNF002-00 / FTA) protein is Leucine--tRNA ligase.